A 465-amino-acid chain; its full sequence is Sensor histidine kinase ZraS (465 aa).

Residues 1–14 (MSFIRLHKDAAATW) lie on the Cytoplasmic side of the membrane. Residues 15 to 35 (LSRLLPAAIFILVGLFSIMVI) form a helical membrane-spanning segment. The Periplasmic segment spans residues 36-202 (RDYGRESAAA…AATQAREWRN (167 aa)). The chain crosses the membrane as a helical span at residues 203–223 (TLIVLSALAAVLLATLLAFFW). The Cytoplasmic segment spans residues 224–465 (HQRYQRSHRE…WLPVIARQQD (242 aa)). One can recognise a Histidine kinase domain in the interval 253–461 (GVAHEIRNPL…VFTIWLPVIA (209 aa)). Residue His256 is modified to Phosphohistidine; by autocatalysis.

Autophosphorylated.

It is found in the cell inner membrane. It carries out the reaction ATP + protein L-histidine = ADP + protein N-phospho-L-histidine.. Activity of the ZraS/ZraR two-component system is repressed by the zinc-bound form of ZraP, which probably interacts with the periplasmic region of ZraS. Functionally, part of the Zra signaling pathway, an envelope stress response (ESR) system composed of the periplasmic accessory protein ZraP, the histidine kinase ZraS and the transcriptional regulator ZraR. The ZraPSR system contributes to antibiotic resistance and is important for membrane integrity in the presence of membrane-targeting biocides. ZraS is a member of the two-component regulatory system ZraS/ZraR. Functions as a membrane-associated sensor kinase that phosphorylates ZraR in response to high concentrations of Zn(2+) or Pb(2+) in the medium. In Salmonella typhimurium (strain LT2 / SGSC1412 / ATCC 700720), this protein is Sensor histidine kinase ZraS.